We begin with the raw amino-acid sequence, 450 residues long: Protein W (450 aa).

The disordered stretch occupies residues 53-92; sequence SGESEQVEGGMSKDDGDVERRNLEDLSSTSPTDGTIGKRV. Basic and acidic residues predominate over residues 63 to 76; it reads MSKDDGDVERRNLE. Phosphoserine; by host is present on Ser257. Residues 265–324 are disordered; the sequence is ISPEDEEPSSVGGKPNESIGRTIEGQSIRDNLQAKDNKSTDVPGAGPKDSAVKEEPPQKR. Ser350 carries the post-translational modification Phosphoserine; by host. Disordered stretches follow at residues 384–403 and 429–450; these read VQTADRQRPGTPMPKSRGIP and PGMFEDHPPTKKARVSMRRMSN. Positions 438–450 are enriched in basic residues; the sequence is TKKARVSMRRMSN. A Nuclear localization signal motif is present at residues 439 to 442; sequence KKAR.

Interacts with host STAT1.

It localises to the host nucleus. Functionally, prevent the establishment of cellular antiviral state by blocking the interferon-alpha/beta (IFN-alpha/beta). Interacts with host STAT1 protein in the nucleus, blocking it's phosphorylation by IFN-alpha/beta. Also blocks antiviral state induced by Toll-like receptor 3/TLR3 binding to dsRNA. The sequence is that of Protein W (P/V/C) from Cynopterus brachyotis (Lesser short-nosed fruit bat).